The chain runs to 166 residues: NAD(P)H-quinone oxidoreductase subunit I, chloroplastic (166 aa).

4Fe-4S ferredoxin-type domains are found at residues 55 to 84 (GRIH…VDWK) and 95 to 124 (LNYS…MTEE). [4Fe-4S] cluster-binding residues include cysteine 64, cysteine 67, cysteine 70, cysteine 74, cysteine 104, cysteine 107, cysteine 110, and cysteine 114.

Belongs to the complex I 23 kDa subunit family. As to quaternary structure, NDH is composed of at least 16 different subunits, 5 of which are encoded in the nucleus. Requires [4Fe-4S] cluster as cofactor.

It localises to the plastid. It is found in the chloroplast thylakoid membrane. The catalysed reaction is a plastoquinone + NADH + (n+1) H(+)(in) = a plastoquinol + NAD(+) + n H(+)(out). The enzyme catalyses a plastoquinone + NADPH + (n+1) H(+)(in) = a plastoquinol + NADP(+) + n H(+)(out). In terms of biological role, NDH shuttles electrons from NAD(P)H:plastoquinone, via FMN and iron-sulfur (Fe-S) centers, to quinones in the photosynthetic chain and possibly in a chloroplast respiratory chain. The immediate electron acceptor for the enzyme in this species is believed to be plastoquinone. Couples the redox reaction to proton translocation, and thus conserves the redox energy in a proton gradient. The protein is NAD(P)H-quinone oxidoreductase subunit I, chloroplastic of Calea megacephala.